The sequence spans 456 residues: GTPase Der (456 aa).

EngA-type G domains follow at residues 3–167 (FTIA…PETE) and 185–360 (IRVA…AVWN). Residues 9-16 (GRPNVGKS), 56-60 (DTAGL), 119-122 (NKSE), 191-198 (GRPNAGKS), 238-242 (DTAGL), and 303-306 (NKWD) contribute to the GTP site. In terms of domain architecture, KH-like spans 361 to 445 (RRVPTAALNR…PVRITLREKA (85 aa)).

The protein belongs to the TRAFAC class TrmE-Era-EngA-EngB-Septin-like GTPase superfamily. EngA (Der) GTPase family. In terms of assembly, associates with the 50S ribosomal subunit.

Functionally, GTPase that plays an essential role in the late steps of ribosome biogenesis. The sequence is that of GTPase Der from Bradyrhizobium sp. (strain BTAi1 / ATCC BAA-1182).